The primary structure comprises 124 residues: Large ribosomal subunit protein uL22 (124 aa).

This sequence belongs to the universal ribosomal protein uL22 family. In terms of assembly, part of the 50S ribosomal subunit.

This protein binds specifically to 23S rRNA; its binding is stimulated by other ribosomal proteins, e.g. L4, L17, and L20. It is important during the early stages of 50S assembly. It makes multiple contacts with different domains of the 23S rRNA in the assembled 50S subunit and ribosome. In terms of biological role, the globular domain of the protein is located near the polypeptide exit tunnel on the outside of the subunit, while an extended beta-hairpin is found that lines the wall of the exit tunnel in the center of the 70S ribosome. The chain is Large ribosomal subunit protein uL22 from Synechococcus sp. (strain JA-2-3B'a(2-13)) (Cyanobacteria bacterium Yellowstone B-Prime).